Reading from the N-terminus, the 155-residue chain is UPF0178 protein RPC_3085 (155 aa).

The protein belongs to the UPF0178 family.

This is UPF0178 protein RPC_3085 from Rhodopseudomonas palustris (strain BisB18).